Consider the following 244-residue polypeptide: Phosphonates import ATP-binding protein PhnC 2 (244 aa).

The 240-residue stretch at 3–242 (LRVEGLKKVY…ELTDYTVDQL (240 aa)) folds into the ABC transporter domain. Position 36–43 (36–43 (GPSGAGKS)) interacts with ATP.

It belongs to the ABC transporter superfamily. Phosphonates importer (TC 3.A.1.9.1) family. The complex is composed of two ATP-binding proteins (PhnC), two transmembrane proteins (PhnE) and a solute-binding protein (PhnD).

The protein resides in the cell membrane. It carries out the reaction phosphonate(out) + ATP + H2O = phosphonate(in) + ADP + phosphate + H(+). Functionally, part of the ABC transporter complex PhnCDE involved in phosphonates import. Responsible for energy coupling to the transport system. The polypeptide is Phosphonates import ATP-binding protein PhnC 2 (Halalkalibacterium halodurans (strain ATCC BAA-125 / DSM 18197 / FERM 7344 / JCM 9153 / C-125) (Bacillus halodurans)).